The sequence spans 100 residues: Urease subunit gamma (100 aa).

The protein belongs to the urease gamma subunit family. In terms of assembly, heterotrimer of UreA (gamma), UreB (beta) and UreC (alpha) subunits. Three heterotrimers associate to form the active enzyme.

The protein resides in the cytoplasm. The enzyme catalyses urea + 2 H2O + H(+) = hydrogencarbonate + 2 NH4(+). Its pathway is nitrogen metabolism; urea degradation; CO(2) and NH(3) from urea (urease route): step 1/1. This chain is Urease subunit gamma, found in Ralstonia pickettii (strain 12J).